Reading from the N-terminus, the 439-residue chain is Histidinol dehydrogenase (439 aa).

NAD(+) is bound by residues Y127, Q185, and N208. Residues S234, Q256, and H259 each contribute to the substrate site. Zn(2+) is bound by residues Q256 and H259. Catalysis depends on proton acceptor residues E323 and H324. Substrate-binding residues include H324, D357, E411, and H416. D357 lines the Zn(2+) pocket. H416 is a binding site for Zn(2+).

It belongs to the histidinol dehydrogenase family. Zn(2+) serves as cofactor.

The catalysed reaction is L-histidinol + 2 NAD(+) + H2O = L-histidine + 2 NADH + 3 H(+). Its pathway is amino-acid biosynthesis; L-histidine biosynthesis; L-histidine from 5-phospho-alpha-D-ribose 1-diphosphate: step 9/9. Catalyzes the sequential NAD-dependent oxidations of L-histidinol to L-histidinaldehyde and then to L-histidine. In Aliivibrio fischeri (strain ATCC 700601 / ES114) (Vibrio fischeri), this protein is Histidinol dehydrogenase.